An 867-amino-acid polypeptide reads, in one-letter code: MDCVTSHNPVATFRCEVKMKPGKILFLLLLTGSVWSLISHPGKTQEAPSPTQLNTQSPAPNAQELTQVTGVRVVPTVQGLEVILDSTAAEKLQVSTQNQGNSLIADITNAQLNLSEGNTFSQNNPATGVTNVTVVNHNDNTIRVTVTGEKSLPKFELFDSDTGLILAFTATEVAQDSPAEVDEPIELVVTATRTETPIQNVPRSITVIDREQIAAQASTSRNLIEILGKTVPGLAPPAQGASNFGLTLRGRNPQVLIDGVPQSTTRNASRDLRTIDAAAIERIEVVRGPSAIYGDGATGGVINIITRRPTEEKLTSRTEVGVSAALGNLEGDSFSTNLQHFISAKQGNFDFTFNFAVAKNGGFFDAQGDRIPSDPNAQGGFADASSINLFGKFGIDIDANQRLQLTFNRFDEKQDTDIASDPRVNTIPGRQKARALEGLSLDERPGNENTFINLQYTHDDLFNSKLQAQLYYRDYLTRFFPFDGRSFASLGNEIFQSRVESEKYGGRLQIETPLFNQGAAKLLWGVDYSQEDTSQPVSVFDQAAFVASGGLAFRKTGDRSWTPPLELRSLGLFAQLNWEISDRFVFNGGVRYENADVSVNDFRTLANPNVTIGGGDLNFNATLFNVGAVYALNPQLSVFANYAQGFSLSDIGLALRNAPPGFSVESLNPEPQKVDNYEIGIRGQWDTVQASLSAFYNESDLGTTFTAPGTVIRAPERIYGLEAAIDAQPSSTWQVGGTFTLIGGEIDSNNDGDYESLDGFRIPPLKLTAYVENETLPGWRNRLQALYSGNREVFGNNNTAFGRRPVESYLTVDYISSIKLGAGTLQLGLENLFNSQYFPVVSQLQANDSAYAAARGRTLSIKYSFDW.

The segment at 40–62 (HPGKTQEAPSPTQLNTQSPAPNA) is disordered. Positions 46–62 (EAPSPTQLNTQSPAPNA) are enriched in polar residues. The TonB box motif lies at 185–192 (IELVVTAT). The region spanning 197-307 (PIQNVPRSIT…TGGVINIITR (111 aa)) is the TBDR plug domain. Residues 313 to 867 (KLTSRTEVGV…TLSIKYSFDW (555 aa)) form the TBDR beta-barrel domain. A TonB C-terminal box motif is present at residues 850 to 867 (AYAAARGRTLSIKYSFDW).

This sequence belongs to the TonB-dependent receptor family.

The protein resides in the cell outer membrane. Involved in the TonB-dependent uptake of iron in complex with schizokinen, a dihydroxamate-type siderophore. This is Schizokinen transporter SchT from Nostoc sp. (strain PCC 7120 / SAG 25.82 / UTEX 2576).